Reading from the N-terminus, the 147-residue chain is Small ribosomal subunit protein bS16m (147 aa).

It belongs to the bacterial ribosomal protein bS16 family. Component of the mitochondrial ribosome small subunit (28S) which comprises a 12S rRNA and about 30 distinct proteins.

It localises to the mitochondrion. This is Small ribosomal subunit protein bS16m (mrps-16) from Caenorhabditis elegans.